The primary structure comprises 515 residues: Sphingolipid 10-desaturase (515 aa).

Residues 3-23 (AVWALLWALQLGTLVGCALVL) form a helical membrane-spanning segment. One can recognise a Cytochrome b5 heme-binding domain in the interval 46-113 (AKPISDQKAA…DISFVFRVMH (68 aa)). Heme is bound by residues H90 and H113. The helical transmembrane segment at 198–218 (TWLLWNTAVLISIIALSVISM) threads the bilayer. Positions 245–249 (HDAEH) match the Histidine box-1 motif. The chain crosses the membrane as a helical span at residues 258-278 (LNDILGWIYGTVFLGVNGAWW). Positions 281–286 (EHREHH) match the Histidine box-2 motif. The next 3 helical transmembrane spans lie at 322-342 (IIHF…FIVG), 359-379 (PWTI…LSQT), and 382-402 (PIPV…QLLG). A Histidine box-3 motif is present at residues 447 to 451 (HYSHH).

The protein belongs to the fatty acid desaturase type 1 family. Requires Fe(2+) as cofactor.

The protein resides in the membrane. It catalyses the reaction a (4E,8E)-4-sphinga-4,8-dienine ceramide + 2 Fe(II)-[cytochrome b5] + O2 + 2 H(+) = an N-acyl-(4E,8E,10E)-sphingatrienine + 2 Fe(III)-[cytochrome b5] + 2 H2O. It functions in the pathway lipid metabolism; sphingolipid metabolism. Its function is as follows. Fatty acid desaturase that catalyzes the introduction of the third double bond at the Delta(10) position in d18:3Delta4,8,10 triunsaturated sphingolipid long fatty acid chains. The cytochrome b5 domain probably acts as the direct electron donor to the active site of the desaturase. This chain is Sphingolipid 10-desaturase, found in Thalassiosira pseudonana (Marine diatom).